A 63-amino-acid chain; its full sequence is MSKVCEICGKGPSFGNNVSHANNKTSRTWYPNLQKIKAVKNGTVRSIKVCTRCIRSGHVTKAL.

This sequence belongs to the bacterial ribosomal protein bL28 family.

The sequence is that of Large ribosomal subunit protein bL28 from Geotalea daltonii (strain DSM 22248 / JCM 15807 / FRC-32) (Geobacter daltonii).